Reading from the N-terminus, the 326-residue chain is Transmembrane protein PVRIG (326 aa).

3 consecutive transmembrane segments (helical) span residues 26–46, 62–78, and 172–192; these read LVLPWVLLTLCVTAGTPEVWV, CGFLGSGSISLVTVSWG, and LAGILGVSGVLLFGCVYLLHL. Tyrosine 233 is modified (phosphotyrosine). The tract at residues 296–326 is disordered; it reads AGERPPHTGPGLTLFPDPRGPRAMEGPLGVR.

Interacts with NECTIN2, hence competing with CD226. Expressed in some types of immune cells. Expressed at low levels on the surface of freshly isolated T-cells and natural killer (NK) cells, predominantly on CD8+ T-cells (mainly memory/effector, but not naive cells) and on both CD16+ and CD16- NK cells. T-cell expression levels are variable among individuals. Not detected in B-cells, naive or helper T-cells, monocytes, nor neutrophils (at protein level). Not detected in dendritic cells.

The protein resides in the cell membrane. Cell surface receptor for NECTIN2. May act as a coinhibitory receptor that suppresses T-cell receptor-mediated signals. Following interaction with NECTIN2, inhibits T-cell proliferation. Competes with CD226 for NECTIN2-binding. In Homo sapiens (Human), this protein is Transmembrane protein PVRIG (PVRIG).